The primary structure comprises 112 residues: Cell cycle protein GpsB (112 aa).

Positions 38–72 (IKDYEAFHKEFEQLKQQNARLKRELEEQKLAATQV) form a coiled coil.

The protein belongs to the GpsB family. Forms polymers through the coiled coil domains. Interacts with PBP1, MreC and EzrA.

Its subcellular location is the cytoplasm. In terms of biological role, divisome component that associates with the complex late in its assembly, after the Z-ring is formed, and is dependent on DivIC and PBP2B for its recruitment to the divisome. Together with EzrA, is a key component of the system that regulates PBP1 localization during cell cycle progression. Its main role could be the removal of PBP1 from the cell pole after pole maturation is completed. Also contributes to the recruitment of PBP1 to the division complex. Not essential for septum formation. This is Cell cycle protein GpsB from Bacillus anthracis (strain A0248).